The primary structure comprises 176 residues: Adenine phosphoribosyltransferase (176 aa).

This sequence belongs to the purine/pyrimidine phosphoribosyltransferase family. In terms of assembly, homodimer.

Its subcellular location is the cytoplasm. It carries out the reaction AMP + diphosphate = 5-phospho-alpha-D-ribose 1-diphosphate + adenine. Its pathway is purine metabolism; AMP biosynthesis via salvage pathway; AMP from adenine: step 1/1. Catalyzes a salvage reaction resulting in the formation of AMP, that is energically less costly than de novo synthesis. The chain is Adenine phosphoribosyltransferase from Thermobifida fusca (strain YX).